We begin with the raw amino-acid sequence, 1440 residues long: Gag-Pro-Pol polyprotein (1440 aa).

The N-myristoyl glycine; by host moiety is linked to residue Gly2. The interval Glu95 to Ala116 is disordered. The short motif at Pro98–Pro101 is the PTAP/PSAP motif element. Positions Pro109–Tyr112 match the PPXY motif motif. 2 consecutive CCHC-type zinc fingers follow at residues Gln349–Gln366 and Gly372–Gln389. In terms of domain architecture, Peptidase A2 spans Val457–Ala535. The active-site For protease activity; shared with dimeric partner is Asp462. In terms of domain architecture, Reverse transcriptase spans Leu593 to Ile783. Residues Asp659, Asp734, Asp735, Asp1019, Glu1052, Asp1074, Asp1135, Asp1208, and Asp1265 each coordinate Mg(2+). The 134-residue stretch at Ile1010–Leu1143 folds into the RNase H type-1 domain. An Integrase catalytic domain is found at Arg1197–Pro1366. A DNA-binding region (integrase-type) is located at residues Lys1371–Cys1420.

Interacts with human TSG101. This interaction is essential for budding and release of viral particles. Requires Mg(2+) as cofactor. In terms of processing, specific enzymatic cleavages by the viral protease yield mature proteins. The polyprotein is cleaved during and after budding, this process is termed maturation. The protease is autoproteolytically processed at its N- and C-termini.

It localises to the virion. It carries out the reaction Endonucleolytic cleavage to 5'-phosphomonoester.. The catalysed reaction is DNA(n) + a 2'-deoxyribonucleoside 5'-triphosphate = DNA(n+1) + diphosphate. Matrix protein p19 targets Gag, Gag-Pro and Gag-Pro-Pol polyproteins to the plasma membrane via a multipartite membrane binding signal, that includes its myristoylated N-terminus. Also mediates nuclear localization of the preintegration complex. Its function is as follows. Capsid protein p24 forms the conical core of the virus that encapsulates the genomic RNA-nucleocapsid complex. Functionally, nucleocapsid protein p15 is involved in the packaging and encapsidation of two copies of the genome. In terms of biological role, the aspartyl protease mediates proteolytic cleavages of Gag, Gag-Pro and Gag-Pro-Pol polyproteins during or shortly after the release of the virion from the plasma membrane. Cleavages take place as an ordered, step-wise cascade to yield mature proteins. This process is called maturation. Displays maximal activity during the budding process just prior to particle release from the cell. Hydrolyzes host EIF4GI in order to shut off the capped cellular mRNA translation. The resulting inhibition of cellular protein synthesis serves to ensure maximal viral gene expression and to evade host immune response. Reverse transcriptase (RT) is a multifunctional enzyme that converts the viral RNA genome into dsDNA in the cytoplasm, shortly after virus entry into the cell. This enzyme displays a DNA polymerase activity that can copy either DNA or RNA templates, and a ribonuclease H (RNase H) activity that cleaves the RNA strand of RNA-DNA heteroduplexes in a partially processive 3' to 5'-endonucleasic mode. Conversion of viral genomic RNA into dsDNA requires many steps. A tRNA-Pro binds to the primer-binding site (PBS) situated at the 5'-end of the viral RNA. RT uses the 3' end of the tRNA primer to perform a short round of RNA-dependent minus-strand DNA synthesis. The reading proceeds through the U5 region and ends after the repeated (R) region which is present at both ends of viral RNA. The portion of the RNA-DNA heteroduplex is digested by the RNase H, resulting in a ssDNA product attached to the tRNA primer. This ssDNA/tRNA hybridizes with the identical R region situated at the 3' end of viral RNA. This template exchange, known as minus-strand DNA strong stop transfer, can be either intra- or intermolecular. RT uses the 3' end of this newly synthesized short ssDNA to perform the RNA-dependent minus-strand DNA synthesis of the whole template. RNase H digests the RNA template except for a polypurine tract (PPT) situated at the 5' end of the genome. It is not clear if both polymerase and RNase H activities are simultaneous. RNase H probably can proceed both in a polymerase-dependent (RNA cut into small fragments by the same RT performing DNA synthesis) and a polymerase-independent mode (cleavage of remaining RNA fragments by free RTs). Secondly, RT performs DNA-directed plus-strand DNA synthesis using the PPT that has not been removed by RNase H as primer. PPT and tRNA primers are then removed by RNase H. The 3' and 5' ssDNA PBS regions hybridize to form a circular dsDNA intermediate. Strand displacement synthesis by RT to the PBS and PPT ends produces a blunt ended, linear dsDNA copy of the viral genome that includes long terminal repeats (LTRs) at both ends. Its function is as follows. Integrase catalyzes viral DNA integration into the host chromosome, by performing a series of DNA cutting and joining reactions. This enzyme activity takes place after virion entry into a cell and reverse transcription of the RNA genome in dsDNA. The first step in the integration process is 3' processing. This step requires a complex comprising the viral genome, matrix protein, and integrase. This complex is called the pre-integration complex (PIC). The integrase protein removes 2 nucleotides from each 3' end of the viral DNA, leaving recessed dinucleotides OH's at the 3' ends. In the second step, the PIC access cell chromosomes during cell division. The third step, termed strand transfer, the integrase protein joins the previously processed 3' ends to the 5'-ends of strands of target cellular DNA at the site of integration. The 5'-ends are produced by integrase-catalyzed staggered cuts, 5 bp apart. A Y-shaped, gapped, recombination intermediate results, with the 5'-ends of the viral DNA strands and the 3' ends of target DNA strands remaining unjoined, flanking a gap of 5 bp. The last step is viral DNA integration into host chromosome. This involves host DNA repair synthesis in which the 5 bp gaps between the unjoined strands (see above) are filled in and then ligated. This chain is Gag-Pro-Pol polyprotein (gag-pro-pol), found in Human T-cell leukemia virus 3 (strain 2026ND) (HTLV-3).